Consider the following 355-residue polypeptide: 45 kDa calcium-binding protein (355 aa).

Residues 1-29 form the signal peptide; the sequence is MASRQAPLCGLAPCCLWLLGVVLLMNASA. A glycan (N-linked (GlcNAc...) asparagine) is linked at Asn33. EF-hand domains follow at residues 91 to 126 and 130 to 165; these read KSRR…KTAE and EAVA…TKGH. Phosphoserine is present on Ser92. Residues Asp104, Asn106, Asp108, Arg110, Glu115, Asp143, Asp145, Asp147, His149, and Glu154 each coordinate Ca(2+). Phosphothreonine occurs at positions 186 and 210. 3 EF-hand domains span residues 226–261, 271–306, and 307–342; these read MLQF…TVEN, WVRD…MNEF, and SALN…FTGS. Asp239, Asp241, Asp243, Lys245, and Glu250 together coordinate Ca(2+). Position 258 is a phosphothreonine (Thr258). Residues Asp284, Asn286, and Asp288 each coordinate Ca(2+). Thr292 carries the phosphothreonine modification. 6 residues coordinate Ca(2+): Glu295, Asp320, Asn322, Asn324, Tyr326, and Glu331. The tract at residues 302 to 355 is necessary for intracellular retention in Golgi apparatus lumen; it reads PMNEFSALNEAKQMIAIADENQNHYLEPEEVLKYSEFFTGSKLVDYARSVHEEF.

This sequence belongs to the CREC family.

It is found in the golgi apparatus lumen. In terms of biological role, may regulate calcium-dependent activities in the endoplasmic reticulum lumen or post-ER compartment. This Bos taurus (Bovine) protein is 45 kDa calcium-binding protein (SDF4).